A 652-amino-acid polypeptide reads, in one-letter code: Leucine aminopeptidase 2 (652 aa).

A peptide-binding positions include 165-167 and 293-298; these read QLE and PYGGME. Histidine 322 is a Zn(2+) binding site. The active-site Proton acceptor is the glutamate 323. Histidine 326 and glutamate 345 together coordinate Zn(2+). Tyrosine 411 functions as the Proton donor in the catalytic mechanism.

This sequence belongs to the peptidase M1 family. Zn(2+) serves as cofactor.

The protein localises to the cytoplasm. Its subcellular location is the nucleus. The enzyme catalyses an epoxide + H2O = an ethanediol. Its function is as follows. Aminopeptidase that preferentially cleaves di- and tripeptides. Also has low epoxide hydrolase activity (in vitro). Can hydrolyze the epoxide leukotriene LTA(4) but it forms preferentially 5,6-dihydroxy-7,9,11,14-eicosatetraenoic acid rather than the cytokine leukotriene B(4) as the product compared to the homologous mammalian enzyme (in vitro). The protein is Leucine aminopeptidase 2 of Candida glabrata (strain ATCC 2001 / BCRC 20586 / JCM 3761 / NBRC 0622 / NRRL Y-65 / CBS 138) (Yeast).